A 400-amino-acid chain; its full sequence is Dual specificity mitogen-activated protein kinase kinase 2 (400 aa).

The residue at position 1 (M1) is an N-acetylmethionine. Residue S23 is modified to Phosphoserine. One can recognise a Protein kinase domain in the interval 72-369 (FERISELGAG…LKLLTNHAFI (298 aa)). ATP-binding positions include 78 to 86 (LGAGNGGVV) and K101. The Proton acceptor role is filled by D194. Phosphoserine; by RAF occurs at positions 222 and 226. Positions 282–310 (PVVDGADGEPHSVSPRPRPPGRPISGHGM) are disordered. A phosphoserine mark is found at S293, S295, and S306. Phosphothreonine occurs at positions 394 and 396.

The protein belongs to the protein kinase superfamily. STE Ser/Thr protein kinase family. MAP kinase kinase subfamily. Interacts with MORG1. Interacts with SGK1. Interacts with KSR1. Interacts with KSR1 and BRAF; the interaction with KSR1 mediates KSR1-BRAF dimerization. Interacts with GLS. The cofactor is Mg(2+). MAPKK is itself dependent on Ser/Thr phosphorylation for activity catalyzed by MAP kinase kinase kinases (RAF or MEKK1). Phosphorylated by MAP2K1/MEK1. In terms of tissue distribution, expressed abundantly in the adult brain and muscle.

It is found in the cytoplasm. The protein resides in the membrane. It carries out the reaction L-seryl-[protein] + ATP = O-phospho-L-seryl-[protein] + ADP + H(+). The enzyme catalyses L-threonyl-[protein] + ATP = O-phospho-L-threonyl-[protein] + ADP + H(+). The catalysed reaction is L-tyrosyl-[protein] + ATP = O-phospho-L-tyrosyl-[protein] + ADP + H(+). In terms of biological role, catalyzes the concomitant phosphorylation of a threonine and a tyrosine residue in a Thr-Glu-Tyr sequence located in MAP kinases. Activates the ERK1 and ERK2 MAP kinases. Activates BRAF in a KSR1 or KSR2-dependent manner; by binding to KSR1 or KSR2 releases the inhibitory intramolecular interaction between KSR1 or KSR2 protein kinase and N-terminal domains which promotes KSR1 or KSR2-BRAF dimerization and BRAF activation. This Rattus norvegicus (Rat) protein is Dual specificity mitogen-activated protein kinase kinase 2 (Map2k2).